Consider the following 588-residue polypeptide: Synaptotagmin-3 (588 aa).

The Vesicular portion of the chain corresponds to 1 to 54; the sequence is MSGDYEDDLCRRALILVSDLCARIRDADTNDRCQEFNELRIRGYPRGPDADISV. The cysteine motif stretch occupies residues 10 to 34; sequence CRRALILVSDLCARIRDADTNDRCQ. A helical transmembrane segment spans residues 55–75; the sequence is SLLSVIVTFCGIVLLGVSLFV. Residues 76 to 588 are Cytoplasmic-facing; that stretch reads SWKLCWVPWR…KGLSEKENSE (513 aa). Disordered stretches follow at residues 129 to 161, 183 to 222, and 238 to 257; these read GGPH…PEPS, PSQT…VTSL, and QTLT…ALPL. Over residues 183–205 the composition is skewed to low complexity; that stretch reads PSQTSPELPSEGGTGSGLLLLPP. Residues 213-222 show a composition bias toward polar residues; sequence AQSHQQVTSL. R286 bears the Omega-N-methylarginine mark. C2 domains are found at residues 297–418 and 429–563; these read PCGR…PLWR and DLGE…EHWH. Residues D328, D334, D386, F387, D388, S391, D394, D460, D466, D520, and D522 each contribute to the Ca(2+) site.

This sequence belongs to the synaptotagmin family. As to quaternary structure, homodimer; disulfide-linked via the cysteine motif. Can also form heterodimers with SYT6, SYT9 and SYT10. It depends on Ca(2+) as a cofactor. As to expression, brain, various endocrine tissues and hormone-secreting clonal cells.

The protein localises to the cell membrane. Its subcellular location is the cytoplasmic vesicle. It localises to the secretory vesicle membrane. In terms of biological role, ca(2+) sensor involved in Ca(2+)-dependent exocytosis of secretory vesicles through Ca(2+) and phospholipid binding to the C2 domain. Ca(2+) induces binding of the C2-domains to phospholipid membranes and to assembled SNARE-complexes; both actions contribute to triggering exocytosis. Plays a role in dendrite formation by melanocytes. This Rattus norvegicus (Rat) protein is Synaptotagmin-3 (Syt3).